The primary structure comprises 205 residues: MTKRSEAKYKIDRRMGQNIWGRPKSPVNRREYGPGQHGQRRKGKLSDFGVQLRAKQKLKGYYANISERQFHAIYVEATRLKGDSGENLIGLLERRLDTVVYRSKFVSTMFAARQFINHGHIKVNGKRVNISSYKVRVGDVIEVKEASKQLAIVLEANQLAERDVPDYIDVDHNKMTAKFGRIPALSDVPFAVQMEPHLIVEFYSR.

A disordered region spans residues 18 to 46; the sequence is NIWGRPKSPVNRREYGPGQHGQRRKGKLS. Positions 94–157 constitute an S4 RNA-binding domain; that stretch reads RRLDTVVYRS…KQLAIVLEAN (64 aa).

It belongs to the universal ribosomal protein uS4 family. In terms of assembly, part of the 30S ribosomal subunit. Contacts protein S5. The interaction surface between S4 and S5 is involved in control of translational fidelity.

One of the primary rRNA binding proteins, it binds directly to 16S rRNA where it nucleates assembly of the body of the 30S subunit. In terms of biological role, with S5 and S12 plays an important role in translational accuracy. In Rhodopseudomonas palustris (strain BisB5), this protein is Small ribosomal subunit protein uS4.